The sequence spans 156 residues: Ribonuclease pancreatic (156 aa).

The signal sequence occupies residues methionine 1 to glycine 26. Positions 33 and 36 each coordinate substrate. The active-site Proton acceptor is histidine 38. 4 disulfide bridges follow: cysteine 54–cysteine 112, cysteine 68–cysteine 123, cysteine 86–cysteine 138, and cysteine 93–cysteine 100. Lysine 69–threonine 73 provides a ligand contact to substrate. Asparagine 90 is a glycosylation site (N-linked (GlcNAc...) asparagine). The substrate site is built by lysine 94 and arginine 113. Residue histidine 147 is the Proton donor of the active site.

The protein belongs to the pancreatic ribonuclease family. As to quaternary structure, monomer. Interacts with and forms tight 1:1 complexes with RNH1. Dimerization of two such complexes may occur. Interaction with RNH1 inhibits this protein. Pancreas.

The protein localises to the secreted. The enzyme catalyses an [RNA] containing cytidine + H2O = an [RNA]-3'-cytidine-3'-phosphate + a 5'-hydroxy-ribonucleotide-3'-[RNA].. It carries out the reaction an [RNA] containing uridine + H2O = an [RNA]-3'-uridine-3'-phosphate + a 5'-hydroxy-ribonucleotide-3'-[RNA].. In terms of biological role, endonuclease that catalyzes the cleavage of RNA on the 3' side of pyrimidine nucleotides. Acts on single-stranded and double-stranded RNA. This is Ribonuclease pancreatic (RNASE1) from Glis glis (Fat dormouse).